The following is a 463-amino-acid chain: Cysteine--tRNA ligase (463 aa).

Residue C29 coordinates Zn(2+). The short motif at 31–41 (PTVYDFAHIGN) is the 'HIGH' region element. Zn(2+) contacts are provided by C227, H252, and E256. The 'KMSKS' region motif lies at 285–289 (KMSKS). ATP is bound at residue K288.

It belongs to the class-I aminoacyl-tRNA synthetase family. In terms of assembly, monomer. It depends on Zn(2+) as a cofactor.

The protein localises to the cytoplasm. It catalyses the reaction tRNA(Cys) + L-cysteine + ATP = L-cysteinyl-tRNA(Cys) + AMP + diphosphate. The protein is Cysteine--tRNA ligase of Rhodopseudomonas palustris (strain BisA53).